Here is a 151-residue protein sequence, read N- to C-terminus: MKCPYCAYGESKVVDSRSTEDGSSIRRRRECLKCNRRYTTYEKIETTPILVIKKNMSREYFDRNKIVNGLMKACQKRPVSRKQIEQIADEVERHISNEMLTEVNTDKIGQIIMKNLKKIDEVSYVRFASVYRQFKDINTFMKEIKNLMDKN.

The segment at 3–34 (CPYCAYGESKVVDSRSTEDGSSIRRRRECLKC) is a zinc-finger region. One can recognise an ATP-cone domain in the interval 49 to 139 (ILVIKKNMSR…VYRQFKDINT (91 aa)).

This sequence belongs to the NrdR family. Zn(2+) serves as cofactor.

Negatively regulates transcription of bacterial ribonucleotide reductase nrd genes and operons by binding to NrdR-boxes. The polypeptide is Transcriptional repressor NrdR (Clostridium botulinum (strain Loch Maree / Type A3)).